Here is a 399-residue protein sequence, read N- to C-terminus: Serine/threonine-protein kinase PKZ1 (399 aa).

The interval 30-50 (PMQCAYQTQSHSNPEGAKRGR) is disordered. A Protein kinase domain is found at 92–371 (WQLFDQIGAG…ADQMLQHPWM (280 aa)). Residues 98-106 (IGAGAFGVV) and Lys-121 each bind ATP. The Proton acceptor role is filled by Asp-219.

This sequence belongs to the protein kinase superfamily. CAMK Ser/Thr protein kinase family. As to quaternary structure, interacts with BZP1.

It carries out the reaction L-seryl-[protein] + ATP = O-phospho-L-seryl-[protein] + ADP + H(+). The catalysed reaction is L-threonyl-[protein] + ATP = O-phospho-L-threonyl-[protein] + ADP + H(+). Its function is as follows. May regulate an early stage of the zoospore pathway. The polypeptide is Serine/threonine-protein kinase PKZ1 (Phytophthora infestans (Potato late blight agent)).